A 270-amino-acid polypeptide reads, in one-letter code: Interleukin-1 beta (270 aa).

Positions 1–118 (MARVPEPTSE…KCDDNAFVHD (118 aa)) are excised as a propeptide.

Belongs to the IL-1 family. Monomer. In its precursor form, weakly interacts with full-length MEFV; the mature cytokine does not interact at all. Interacts with integrins ITGAV:ITGBV and ITGA5:ITGB1; integrin-binding is required for IL1B signaling. Interacts with cargo receptor TMED10; the interaction is direct and is required for the secretion of IL1B mature form. Interacts with HSP90AB1; the interaction facilitates cargo translocation into the ERGIC. Interacts with HSP90B1; the interaction facilitates cargo translocation into the ERGIC.

The protein resides in the cytoplasm. It is found in the cytosol. It localises to the secreted. Its subcellular location is the lysosome. The protein localises to the extracellular exosome. Functionally, potent pro-inflammatory cytokine. Initially discovered as the major endogenous pyrogen, induces prostaglandin synthesis, neutrophil influx and activation, T-cell activation and cytokine production, B-cell activation and antibody production, and fibroblast proliferation and collagen production. Promotes Th17 differentiation of T-cells. Synergizes with IL12/interleukin-12 to induce IFNG synthesis from T-helper 1 (Th1) cells. Plays a role in angiogenesis by inducing VEGF production synergistically with TNF and IL6. Involved in transduction of inflammation downstream of pyroptosis: its mature form is specifically released in the extracellular milieu by passing through the gasdermin-D (GSDMD) pore. This is Interleukin-1 beta (IL1B) from Mustela putorius furo (European domestic ferret).